Consider the following 485-residue polypeptide: Two-component response regulator ORR31 (485 aa).

The Response regulatory domain occupies 13-138 (RVMPVDGDTK…TMAQLWRVVA (126 aa)). Position 66 is a 4-aspartylphosphate (Asp66). The segment covering 195–204 (LTINVDSGSS) has biased composition (polar residues). The tract at residues 195 to 236 (LTINVDSGSSDGADANPRQKLEHKKDAKGPLGQHVASHLQPQ) is disordered. Over residues 211-222 (PRQKLEHKKDAK) the composition is skewed to basic and acidic residues.

Belongs to the ARR family. Type-B subfamily. Post-translationally, two-component system major event consists of a His-to-Asp phosphorelay between a sensor histidine kinase (HK) and a response regulator (RR). In plants, the His-to-Asp phosphorelay involves an additional intermediate named Histidine-containing phosphotransfer protein (HPt). This multistep phosphorelay consists of a His-Asp-His-Asp sequential transfer of a phosphate group between first a His and an Asp of the HK protein, followed by the transfer to a conserved His of the HPt protein and finally the transfer to an Asp in the receiver domain of the RR protein.

Its function is as follows. Functions as a response regulator involved in His-to-Asp phosphorelay signal transduction system. Phosphorylation of the Asp residue in the receiver domain activates the ability of the protein to promote the transcription of target genes. May directly activate some type-A response regulators in response to cytokinins. In Oryza sativa subsp. japonica (Rice), this protein is Two-component response regulator ORR31.